We begin with the raw amino-acid sequence, 441 residues long: Proline--tRNA ligase (441 aa).

Belongs to the class-II aminoacyl-tRNA synthetase family. ProS type 2 subfamily. Homodimer.

Its subcellular location is the cytoplasm. It catalyses the reaction tRNA(Pro) + L-proline + ATP = L-prolyl-tRNA(Pro) + AMP + diphosphate. Catalyzes the attachment of proline to tRNA(Pro) in a two-step reaction: proline is first activated by ATP to form Pro-AMP and then transferred to the acceptor end of tRNA(Pro). The protein is Proline--tRNA ligase of Methylorubrum populi (strain ATCC BAA-705 / NCIMB 13946 / BJ001) (Methylobacterium populi).